Consider the following 156-residue polypeptide: Small ribosomal subunit protein uS7 (156 aa).

This sequence belongs to the universal ribosomal protein uS7 family. Part of the 30S ribosomal subunit. Contacts proteins S9 and S11.

One of the primary rRNA binding proteins, it binds directly to 16S rRNA where it nucleates assembly of the head domain of the 30S subunit. Is located at the subunit interface close to the decoding center, probably blocks exit of the E-site tRNA. The protein is Small ribosomal subunit protein uS7 of Klebsiella pneumoniae (strain 342).